A 157-amino-acid chain; its full sequence is 2-C-methyl-D-erythritol 2,4-cyclodiphosphate synthase (157 aa).

Residues Asp-8, His-10, and His-42 each coordinate a divalent metal cation. 8-10 (DVH) serves as a coordination point for 4-CDP-2-C-methyl-D-erythritol 2-phosphate. Residues 56–58 (DIG), 132–135 (STSE), Phe-139, and Arg-142 contribute to the 4-CDP-2-C-methyl-D-erythritol 2-phosphate site.

Belongs to the IspF family. As to quaternary structure, homotrimer. The cofactor is a divalent metal cation.

The enzyme catalyses 4-CDP-2-C-methyl-D-erythritol 2-phosphate = 2-C-methyl-D-erythritol 2,4-cyclic diphosphate + CMP. It functions in the pathway isoprenoid biosynthesis; isopentenyl diphosphate biosynthesis via DXP pathway; isopentenyl diphosphate from 1-deoxy-D-xylulose 5-phosphate: step 4/6. In terms of biological role, involved in the biosynthesis of isopentenyl diphosphate (IPP) and dimethylallyl diphosphate (DMAPP), two major building blocks of isoprenoid compounds. Catalyzes the conversion of 4-diphosphocytidyl-2-C-methyl-D-erythritol 2-phosphate (CDP-ME2P) to 2-C-methyl-D-erythritol 2,4-cyclodiphosphate (ME-CPP) with a corresponding release of cytidine 5-monophosphate (CMP). The chain is 2-C-methyl-D-erythritol 2,4-cyclodiphosphate synthase from Dehalococcoides mccartyi (strain ATCC BAA-2266 / KCTC 15142 / 195) (Dehalococcoides ethenogenes (strain 195)).